Consider the following 477-residue polypeptide: Dihydrolipoyl dehydrogenase (477 aa).

FAD is bound by residues 34–49 (EKYKGKEGKTALGGTC), Lys58, and Gly122. Cys49 and Cys54 are disulfide-bonded. NAD(+)-binding positions include 188 to 192 (GAGVI), Glu211, Val245, and 276 to 279 (AVGR). Residues Asp319 and Ala327 each coordinate FAD. His451 acts as the Proton acceptor in catalysis.

It belongs to the class-I pyridine nucleotide-disulfide oxidoreductase family. As to quaternary structure, homodimer. The cofactor is FAD.

It is found in the cytoplasm. The enzyme catalyses N(6)-[(R)-dihydrolipoyl]-L-lysyl-[protein] + NAD(+) = N(6)-[(R)-lipoyl]-L-lysyl-[protein] + NADH + H(+). In terms of biological role, the pyruvate dehydrogenase complex catalyzes the overall conversion of pyruvate to acetyl-CoA and CO(2). It contains multiple copies of three enzymatic components: pyruvate dehydrogenase (E1), dihydrolipoamide acetyltransferase (E2) and lipoamide dehydrogenase (E3). The sequence is that of Dihydrolipoyl dehydrogenase from Azotobacter vinelandii.